Consider the following 464-residue polypeptide: UDP-N-acetylmuramate--L-alanine ligase (464 aa).

Position 111-117 (111-117 (GAHGKTT)) interacts with ATP.

The protein belongs to the MurCDEF family.

The protein localises to the cytoplasm. The catalysed reaction is UDP-N-acetyl-alpha-D-muramate + L-alanine + ATP = UDP-N-acetyl-alpha-D-muramoyl-L-alanine + ADP + phosphate + H(+). Its pathway is cell wall biogenesis; peptidoglycan biosynthesis. Cell wall formation. In Dictyoglomus turgidum (strain DSM 6724 / Z-1310), this protein is UDP-N-acetylmuramate--L-alanine ligase.